A 391-amino-acid polypeptide reads, in one-letter code: Acetate kinase (391 aa).

Asn7 provides a ligand contact to Mg(2+). Lys14 is a binding site for ATP. A substrate-binding site is contributed by Arg88. Residue Asp145 is the Proton donor/acceptor of the active site. Residues His203 to Gly207, Asp278 to Arg280, and Gly326 to Asn330 each bind ATP. Mg(2+) is bound at residue Glu378.

Belongs to the acetokinase family. Homodimer. Mg(2+) is required as a cofactor. It depends on Mn(2+) as a cofactor.

The protein localises to the cytoplasm. It carries out the reaction acetate + ATP = acetyl phosphate + ADP. The protein operates within metabolic intermediate biosynthesis; acetyl-CoA biosynthesis; acetyl-CoA from acetate: step 1/2. Its function is as follows. Catalyzes the formation of acetyl phosphate from acetate and ATP. Can also catalyze the reverse reaction. This Phytoplasma mali (strain AT) protein is Acetate kinase.